We begin with the raw amino-acid sequence, 137 residues long: Protein archease (137 aa).

Asp11, Asp136, and Ile137 together coordinate Ca(2+).

The protein belongs to the archease family.

Activates the tRNA-splicing ligase complex by facilitating the enzymatic turnover of catalytic subunit RtcB. Acts by promoting the guanylylation of RtcB, a key intermediate step in tRNA ligation. Can also alter the NTP specificity of RtcB such that ATP, dGTP or ITP is used efficiently. This is Protein archease from Archaeoglobus fulgidus (strain ATCC 49558 / DSM 4304 / JCM 9628 / NBRC 100126 / VC-16).